The primary structure comprises 1610 residues: Adenylate cyclase type 10 (1610 aa).

2 Guanylate cyclase domains span residues 42-179 (VLMF…RLAQ) and 293-418 (TIVF…ARMM). Mg(2+)-binding residues include Asp47 and Ile48. Position 47 to 52 (47 to 52 (DISGFT)) interacts with ATP. Lys95 provides a ligand contact to hydrogencarbonate. A Mg(2+)-binding site is contributed by Asp99. ATP contacts are provided by Asp99 and Lys144. Hydrogencarbonate-binding residues include Val167, Arg176, and Met337. ATP contacts are provided by residues Val406 and 412 to 416 (NLAAR).

The protein belongs to the adenylyl cyclase class-4/guanylyl cyclase family. Requires Mg(2+) as cofactor. It depends on Mn(2+) as a cofactor. Cleavage may occur to generate the active 48 kDa form. Detected in airway epithelial cells and testis (at protein level). Weakly expressed in multiple tissues. Expressed in brain, heart, kidney, liver, lung, pancreas, peripheral blood leukocytes, placenta, skeletal muscle, stomach, thymus, airway epithelial cells, duodenum, jejunum and ileum. Very low level of expression in bone.

It is found in the cell membrane. The protein localises to the cytoplasm. It localises to the cytoskeleton. The protein resides in the perinuclear region. Its subcellular location is the nucleus. It is found in the cell projection. The protein localises to the cilium. It localises to the mitochondrion. It catalyses the reaction ATP = 3',5'-cyclic AMP + diphosphate. Activated by manganese or magnesium ions. In the presence of magnesium ions, the enzyme is activated by bicarbonate. In the presence of manganese ions, the enzyme is inhibited by bicarbonate. In the absence of magnesium and bicarbonate, the enzyme is weakly activated by calcium. Calcium mildly increases the enzyme activity, also in the presence of magnesium ions. In terms of biological role, catalyzes the formation of the signaling molecule cAMP. May function as sensor that mediates responses to changes in cellular bicarbonate and CO(2) levels. Has a critical role in mammalian spermatogenesis by producing the cAMP which regulates cAMP-responsive nuclear factors indispensable for sperm maturation in the epididymis. Induces capacitation, the maturational process that sperm undergo prior to fertilization. Involved in ciliary beat regulation. The polypeptide is Adenylate cyclase type 10 (ADCY10) (Homo sapiens (Human)).